The following is a 307-amino-acid chain: tRNA dimethylallyltransferase (307 aa).

An ATP-binding site is contributed by 9–16 (GPTAVGKT). Position 11–16 (11–16 (TAVGKT)) interacts with substrate. The interaction with substrate tRNA stretch occupies residues 34–37 (DSMQ).

This sequence belongs to the IPP transferase family. As to quaternary structure, monomer. The cofactor is Mg(2+).

It catalyses the reaction adenosine(37) in tRNA + dimethylallyl diphosphate = N(6)-dimethylallyladenosine(37) in tRNA + diphosphate. In terms of biological role, catalyzes the transfer of a dimethylallyl group onto the adenine at position 37 in tRNAs that read codons beginning with uridine, leading to the formation of N6-(dimethylallyl)adenosine (i(6)A). This is tRNA dimethylallyltransferase from Limosilactobacillus reuteri (strain DSM 20016) (Lactobacillus reuteri).